A 271-amino-acid chain; its full sequence is Insulin-like growth factor-binding protein 5 (271 aa).

The N-terminal stretch at 1 to 19 (MVISVVLLLLAACAVPAQG) is a signal peptide. Positions 22 to 102 (SFVHCEPCDE…LHGRGVCLNE (81 aa)) constitute an IGFBP N-terminal domain. Intrachain disulfides connect Cys-26–Cys-52, Cys-29–Cys-54, Cys-37–Cys-55, Cys-44–Cys-58, Cys-66–Cys-79, and Cys-73–Cys-99. A compositionally biased stretch (basic and acidic residues) spans 109 to 121 (TKIERDSREHEEP). The segment at 109–129 (TKIERDSREHEEPTTSEMAEE) is disordered. Ser-115 carries the phosphoserine modification. Positions 188-262 (QGPCRRHMEA…MEYVDGDFQC (75 aa)) constitute a Thyroglobulin type-1 domain. 3 cysteine pairs are disulfide-bonded: Cys-191/Cys-218, Cys-229/Cys-240, and Cys-242/Cys-262.

In terms of assembly, interacts with IGF1; this interaction enhances the growth stimulatory effects of IGF1 on fibroblasts. Interacts with CAV1; this interaction allows trafficking of IGFBP5 from the plasma membrane to the nucleus. Interacts with NCL; this interaction is necessary for IGFBP5 localization to the nucleus. In terms of tissue distribution, mostly in kidney.

It is found in the secreted. The protein resides in the cytoplasm. It localises to the nucleus. Multifunctional protein that plays a critical role in regulating the availability of IGFs to their receptors and thereby regulates IGF-mediated cellular processes including proliferation, differentiation, and apoptosis in a cell-type specific manner. Increases the cell proliferation of osteoblasts, intestinal smooth muscle cells and neuroblastoma cells. Enhances adhesion and survival of epithelial cells but decreases adhesion of mesenchymal cells. Once secreted, acts as a major mediator of mTORC1-dependent feedback inhibition of IGF1 signaling. Also plays a role in the induction of extracellular matrix (ECM) production and deposition independently of its nuclear translocation and binding to IGFs. Acts itself as a growth factor that can act independently of IGFs to regulate bone formation. Acts as a ligand for the ROR1 receptor which triggers formation of ROR1/HER2 heterodimer to enhance CREB oncogenic signaling. In Rattus norvegicus (Rat), this protein is Insulin-like growth factor-binding protein 5 (Igfbp5).